A 409-amino-acid polypeptide reads, in one-letter code: Astacin-like metalloendopeptidase (409 aa).

A signal peptide spans M1–G19. Positions F20–R86 are excised as a propeptide. A compositionally biased stretch (low complexity) spans T30–E42. Residues T30–S55 are disordered. Positions S87–S285 constitute a Peptidase M12A domain. 5 disulfides stabilise this stretch: C91–C94, C134–C284, C155–C175, C287–C313, and C339–C362. H183 contributes to the Zn(2+) binding site. The active site involves E184. Positions 187 and 193 each coordinate Zn(2+). In terms of domain architecture, CUB spans C287 to A399.

Requires Zn(2+) as cofactor.

It is found in the cytoplasm. It localises to the cell membrane. Its subcellular location is the cytoplasmic vesicle. The protein localises to the secretory vesicle. The protein resides in the cortical granule. Functionally, probable oocyte-specific oolemmal receptor involved in sperm and egg adhesion and fertilization. Protease which may play a role in the breaking down of the vitelline membrane (days 0-5) and possibly, in the digestion of the egg white (days 9-12). The chain is Astacin-like metalloendopeptidase from Coturnix japonica (Japanese quail).